The primary structure comprises 470 residues: N amino acid transport system protein (470 aa).

Residues 1 to 11 are compositionally biased toward basic and acidic residues; it reads MDSQYETKKND. A disordered region spans residues 1–21; that stretch reads MDSQYETKKNDPNAIMPYPES. The Extracellular portion of the chain corresponds to 1–56; that stretch reads MDSQYETKKNDPNAIMPYPESNDEHVGEVRGLGGGIMDKEPEAQEGHAKFHRLGWK. Helical transmembrane passes span 57-77 and 78-98; these read RLTVVLIVEAIALGSLSLPGA and FATLGMVPGVILSVGMGLICI. The Extracellular portion of the chain corresponds to 99-131; that stretch reads YTAHVIGQTKLKHPEIAHYADVGRVMFGRWGYE. The chain crosses the membrane as a helical span at residues 132 to 152; sequence IISFMFVLQLIFIVGSHVLTG. Residues 153–168 lie on the Cytoplasmic side of the membrane; the sequence is TIMWGTITDNGNGTCS. 2 helical membrane-spanning segments follow: residues 169 to 189 and 191 to 211; these read LVFGIVSAIILFLLAIPPSFA and VAILGYIDFVSICAAILITMI. Over 212-236 the chain is Cytoplasmic; it reads ATGIRSSHQEGGLAAVPWSCWPKED. The chain crosses the membrane as a helical span at residues 237–257; that stretch reads LSLAEGFIAVSNIVFAYSFAM. Over 258–275 the chain is Extracellular; the sequence is CQFSFMDEMHTPSDYKKS. Residues 276–296 form a helical membrane-spanning segment; that stretch reads IVALGLIEIFIYTVTGGVVYA. Residues 297–316 are Cytoplasmic-facing; it reads FVGPEVQSPALLSAGPLLAK. The helical transmembrane segment at 317-337 threads the bilayer; sequence VAFGIALPVIFISGSINTVVV. At 338-357 the chain is on the extracellular side; that stretch reads SRYLIERIWPNNVIRYVNTP. The chain crosses the membrane as a helical span at residues 358-378; that stretch reads AGWMVWLGFDFGITLIAWVIA. The Cytoplasmic portion of the chain corresponds to 379–386; sequence EAIPFFSD. The chain crosses the membrane as a helical span at residues 387 to 407; sequence LLAICSALFISGFSFYFPALM. Residues 408–427 are Extracellular-facing; the sequence is YFKITRNDAKSQGKKYFLDA. The chain crosses the membrane as a helical span at residues 428–448; sequence LNMLCFVIGMGILGIGTYAAI. Over 449-470 the chain is Cytoplasmic; that stretch reads QDIMDRYDHGKVSKPYSCAPLA.

The protein belongs to the amino acid/polyamine transporter 2 family.

It is found in the membrane. Functionally, required for the transport of neutral aliphatic and aromatic amino acids via the N system. The chain is N amino acid transport system protein (mtr) from Neurospora crassa (strain ATCC 24698 / 74-OR23-1A / CBS 708.71 / DSM 1257 / FGSC 987).